The following is a 104-amino-acid chain: MHLLERQHDIQPLSRADMTIHLNGQPVAAAAGETVLNVLNAVGLRRLARNDHGQASGAFCGMGVCHCCLVAIDGRPKRRACQTVVRPGMRVETESNRFDQEERP.

The 2Fe-2S ferredoxin-type domain occupies 16-97 (ADMTIHLNGQ…GMRVETESNR (82 aa)). 4 residues coordinate [2Fe-2S] cluster: C60, C65, C68, and C81.

As to quaternary structure, heterotrimer of HcnA, HcnB and HcnC.

Its subcellular location is the cell membrane. It catalyses the reaction glycine + 2 A = hydrogen cyanide + 2 AH2 + CO2. Oxygen is necessary for cyanogenesis. Activated by succinate, glycine methyl ester, glucose and D,L-methionine in addition to glycine. Phenazine methosulfate, methylene blue, 2,6-dichlorophenolindophenol (DCIP) and ferricyanide can replace oxygen for the reaction. Inhibited by pyrrolnitrin and acriflavine at 1 mM concentration. A three-component membrane-bound flavoenzyme that catalyzes the formation of hydrogen cyanide, a secondary metabolite, by transfer of electrons to a cyanide-resistant branch of the aerobic respiratory chain. This Pseudomonas aeruginosa (strain ATCC 15692 / DSM 22644 / CIP 104116 / JCM 14847 / LMG 12228 / 1C / PRS 101 / PAO1) protein is Hydrogen cyanide synthase subunit HcnA.